We begin with the raw amino-acid sequence, 350 residues long: Nicotinate-nucleotide--dimethylbenzimidazole phosphoribosyltransferase (350 aa).

E316 acts as the Proton acceptor in catalysis.

This sequence belongs to the CobT family.

It carries out the reaction 5,6-dimethylbenzimidazole + nicotinate beta-D-ribonucleotide = alpha-ribazole 5'-phosphate + nicotinate + H(+). The protein operates within nucleoside biosynthesis; alpha-ribazole biosynthesis; alpha-ribazole from 5,6-dimethylbenzimidazole: step 1/2. In terms of biological role, catalyzes the synthesis of alpha-ribazole-5'-phosphate from nicotinate mononucleotide (NAMN) and 5,6-dimethylbenzimidazole (DMB). The chain is Nicotinate-nucleotide--dimethylbenzimidazole phosphoribosyltransferase from Pseudomonas syringae pv. tomato (strain ATCC BAA-871 / DC3000).